Reading from the N-terminus, the 269-residue chain is Probable 3-deoxy-manno-octulosonic acid transferase (269 aa).

Its subcellular location is the cytoplasm. The enzyme catalyses an alpha-Kdo-(2-&gt;4)-alpha-Kdo-(2-&gt;6)-lipid IVA + CMP-3-deoxy-beta-D-manno-octulosonate = an alpha-Kdo-(2-&gt;4)-alpha-Kdo-(2-&gt;4)-alpha-Kdo-(2-&gt;6)-lipid IVA + CMP + H(+). It participates in bacterial outer membrane biogenesis; LPS core biosynthesis. In terms of biological role, involved in the biosynthesis of the core oligosaccharide region of lipopolysaccharide (LPS). Required for the addition of 3-deoxy-D-manno-oct-2-ulosonic acid III (KdoIII) to the KdoII residue of the inner lipopolysaccharide core. This Salmonella typhimurium (strain LT2 / SGSC1412 / ATCC 700720) protein is Probable 3-deoxy-manno-octulosonic acid transferase.